A 470-amino-acid chain; its full sequence is Poly(A) polymerase catalytic subunit (470 aa).

Active-site residues include Asp-192 and Asp-194.

It belongs to the poxviridae poly(A) polymerase catalytic subunit family. Heterodimer of a large (catalytic) subunit and a small (regulatory) subunit.

The catalysed reaction is RNA(n) + ATP = RNA(n)-3'-adenine ribonucleotide + diphosphate. Functionally, polymerase that creates the 3'-poly(A) tail of mRNA's. In Molluscum contagiosum virus subtype 1 (MOCV), this protein is Poly(A) polymerase catalytic subunit (PAPL).